A 347-amino-acid polypeptide reads, in one-letter code: Protein RecA (347 aa).

Residue 67–74 (GPESSGKT) participates in ATP binding.

Belongs to the RecA family.

Its subcellular location is the cytoplasm. In terms of biological role, can catalyze the hydrolysis of ATP in the presence of single-stranded DNA, the ATP-dependent uptake of single-stranded DNA by duplex DNA, and the ATP-dependent hybridization of homologous single-stranded DNAs. It interacts with LexA causing its activation and leading to its autocatalytic cleavage. In Helicobacter pylori (strain P12), this protein is Protein RecA.